The sequence spans 287 residues: Protease HtpX homolog (287 aa).

Helical transmembrane passes span 4-24 (VGLFLATNLAILLLLGLVMSL) and 35-53 (LLLMAGCFGMGGSLISLAL). His139 contacts Zn(2+). The active site involves Glu140. His143 lines the Zn(2+) pocket. Transmembrane regions (helical) follow at residues 147–167 (GDMVTLSLIQGVLNTFVIFLS) and 194–214 (AVSMLLEFVFGLFASMIVMWF). Residue Glu219 participates in Zn(2+) binding.

The protein belongs to the peptidase M48B family. It depends on Zn(2+) as a cofactor.

Its subcellular location is the cell inner membrane. This chain is Protease HtpX homolog, found in Desulfotalea psychrophila (strain LSv54 / DSM 12343).